A 334-amino-acid polypeptide reads, in one-letter code: NAD-dependent protein deacylase sirtuin-6 (334 aa).

Ser2 carries the post-translational modification N-acetylserine. At Ser10 the chain carries Phosphoserine. The region spanning 27-272 is the Deacetylase sirtuin-type domain; that stretch reads PEELERKVWE…CRLMKHLGLE (246 aa). Position 33 is an N6-acetyllysine (Lys33). NAD(+) is bound by residues Ala53, Thr57, Phe64, Arg65, Trp71, Gln113, and His133. The active-site Proton acceptor is the His133. 3 residues coordinate Zn(2+): Cys141, Cys144, and Cys166. A Glycyl lysine isopeptide (Lys-Gly) (interchain with G-Cter in ubiquitin) cross-link involves residue Lys170. A Zn(2+)-binding site is contributed by Cys177. NAD(+) is bound by residues Gly214, Ser216, Asn240, Gln242, and Val258. The interval 312-334 is disordered; that stretch reads KSKPNSPILHRPPKRVKTEAAPS.

This sequence belongs to the sirtuin family. Class IV subfamily. In terms of assembly, homodimer; binds to nucleosomes and DNA ends as a homodimer. Interacts with RELA; interferes with RELA binding to target DNA. Interacts with SMARCA5; promoting recruitment of SMARCA5/SNF2H to double-strand breaks (DSBs) sites. Interacts with the mTORC2 complex; preventing the ability of SIRT6 to deacetylate FOXO1. Interacts with the CLOCK-BMAL1 complex; recruited by the CLOCK-BMAL1 complex to regulate expression of clock-controlled genes. Interacts with CSNK2A2; preventing CSNK2A2 localization to the nucleus. The cofactor is Zn(2+). Post-translationally, acetylated at Lys-33. Deacetylation at Lys-33 by SIRT1 promotes homomultimerization and binding to double-strand breaks (DSBs) sites. Phosphorylation at Ser-10 by MAPK8/JNK1 in response to oxidative stress stimulates the mono-ADP-ribosyltransferase activity on PARP1, leading to PARP1 recruitment to double-strand breaks (DSBs). In terms of processing, monoubiquitinated at Lys-170 by STUB1/CHIP, preventing its degradation by the proteasome. Post-translationally, sumoylated, leading to specifically decrease ability to deacetylate histone H3 at 'Lys-56' (H3K56ac). Highest levels are found in muscle, thymus, spleen, brain and heart (at protein level).

It localises to the nucleus. The protein localises to the chromosome. It is found in the telomere. Its subcellular location is the endoplasmic reticulum. The catalysed reaction is N(6)-acetyl-L-lysyl-[protein] + NAD(+) + H2O = 2''-O-acetyl-ADP-D-ribose + nicotinamide + L-lysyl-[protein]. The enzyme catalyses N(6)-tetradecanoyl-L-lysyl-[protein] + NAD(+) + H2O = 2''-O-tetradecanoyl-ADP-D-ribose + nicotinamide + L-lysyl-[protein]. It catalyses the reaction N(6)-hexadecanoyl-L-lysyl-[protein] + NAD(+) + H2O = 2''-O-hexadecanoyl-ADP-D-ribose + nicotinamide + L-lysyl-[protein]. It carries out the reaction L-lysyl-[protein] + NAD(+) = N(6)-(ADP-D-ribosyl)-L-lysyl-[protein] + nicotinamide + H(+). The catalysed reaction is L-arginyl-[protein] + NAD(+) = N(omega)-(ADP-D-ribosyl)-L-arginyl-[protein] + nicotinamide + H(+). With respect to regulation, compared to the defatty-acylase activity, the protein deacetylase activity is weak in vitro, and requires activation. The histone deacetylase activity is strongly activated upon binding to nucleosomes and chromatin in vivo. Two molecules of SIRT6 associate with the acidic patch of one nucleosome, while the C-terminal disordered region of SIRT6 associates with nucleosomal DNA, leading to efficient histone deacetylation. The protein-lysine deacetylase activity is also activated by long-chain free fatty-acids. In terms of biological role, NAD-dependent protein deacetylase, deacylase and mono-ADP-ribosyltransferase that plays an essential role in DNA damage repair, telomere maintenance, metabolic homeostasis, inflammation, tumorigenesis and aging. Displays protein-lysine deacetylase or defatty-acylase (demyristoylase and depalmitoylase) activity, depending on the context. Acts as a key histone deacetylase by catalyzing deacetylation of histone H3 at 'Lys-9', 'Lys-18' and 'Lys-56' (H3K9ac, H3K18ac and H3K56ac, respectively), suppressing target gene expression of several transcription factors, including NF-kappa-B. Acts as an inhibitor of transcription elongation by mediating deacetylation of H3K9ac and H3K56ac, preventing release of NELFE from chromatin and causing transcriptional pausing. Involved in DNA repair by promoting double-strand break (DSB) repair: acts as a DSB sensor by recognizing and binding DSB sites, leading to (1) recruitment of DNA repair proteins, such as SMARCA5/SNF2H, and (2) deacetylation of histone H3K9ac and H3K56ac. SIRT6 participation to DSB repair is probably involved in extension of life span. Also promotes DNA repair by deacetylating non-histone proteins, such as DDB2 and p53/TP53. Specifically deacetylates H3K18ac at pericentric heterochromatin, thereby maintaining pericentric heterochromatin silencing at centromeres and protecting against genomic instability and cellular senescence. Involved in telomere maintenance by catalyzing deacetylation of histone H3 in telomeric chromatin, regulating telomere position effect and telomere movement in response to DNA damage. Required for embryonic stem cell differentiation by mediating histone deacetylation of H3K9ac. Plays a major role in metabolism by regulating processes such as glycolysis, gluconeogenesis, insulin secretion and lipid metabolism. Inhibits glycolysis via histone deacetylase activity and by acting as a corepressor of the transcription factor HIF1A, thereby controlling the expression of multiple glycolytic genes. Has tumor suppressor activity by repressing glycolysis, thereby inhibiting the Warburg effect. Also regulates glycolysis and tumorigenesis by mediating deacetylation and nuclear export of non-histone proteins, such as isoform M2 of PKM (PKM2). Acts as a negative regulator of gluconeogenesis by mediating deacetylation of non-histone proteins, such as FOXO1 and KAT2A/GCN5. Promotes beta-oxidation of fatty acids during fasting by catalyzing deacetylation of NCOA2, inducing coactivation of PPARA. Acts as a regulator of lipid catabolism in brown adipocytes, both by catalyzing deacetylation of histones and non-histone proteins, such as FOXO1. Also acts as a regulator of circadian rhythms, both by regulating expression of clock-controlled genes involved in lipid and carbohydrate metabolism, and by catalyzing deacetylation of PER2. The defatty-acylase activity is specifically involved in regulation of protein secretion. Has high activity toward long-chain fatty acyl groups and mediates protein-lysine demyristoylation and depalmitoylation of target proteins, such as RRAS2 and TNF, thereby regulating their secretion. Also acts as a mono-ADP-ribosyltransferase by mediating mono-ADP-ribosylation of PARP1, TRIM28/KAP1 or SMARCC2/BAF170. Mono-ADP-ribosyltransferase activity is involved in DNA repair, cellular senescence, repression of LINE-1 retrotransposon elements and regulation of transcription. The polypeptide is NAD-dependent protein deacylase sirtuin-6 (Mus musculus (Mouse)).